The following is a 261-amino-acid chain: Undecaprenyl-diphosphatase (261 aa).

The next 7 helical transmembrane spans lie at 38-58 (RSDFFNIVIQAGAILAITFVF), 75-95 (RDYVMKLATAFLITAVVGLAV), 106-126 (IQPIAWALIIGGIWILIAESV), 136-156 (VTWSVAIAVGLAQVVAGVFPG), 181-201 (FSFLVGIPTMFSASSYACFEL), 217-237 (VAFVAAMLTGFAVVKWLLGYI), and 241-261 (SFAPFAYYRIALGLVLLTWLT).

This sequence belongs to the UppP family.

It localises to the cell inner membrane. It catalyses the reaction di-trans,octa-cis-undecaprenyl diphosphate + H2O = di-trans,octa-cis-undecaprenyl phosphate + phosphate + H(+). Functionally, catalyzes the dephosphorylation of undecaprenyl diphosphate (UPP). Confers resistance to bacitracin. The sequence is that of Undecaprenyl-diphosphatase from Xylella fastidiosa (strain Temecula1 / ATCC 700964).